The chain runs to 88 residues: Alpha-latrotoxin-associated low molecular weight protein (88 aa).

The signal sequence occupies residues 1–18 (MSKLFFVVFLCLIISVFA).

It belongs to the arthropod CHH/MIH/GIH/VIH hormone family. As to expression, expressed by the venom gland.

It is found in the secreted. In terms of biological role, may increase the toxicity of alpha-latrotoxin and/or other venom components. Is non-toxic to mice and to the cockroach Periplaneta americana. This Latrodectus tredecimguttatus (Mediterranean black widow spider) protein is Alpha-latrotoxin-associated low molecular weight protein.